We begin with the raw amino-acid sequence, 347 residues long: DnaJ protein ERDJ3B (347 aa).

Residues 1–23 form the signal peptide; sequence MAAPRWIGPLLLLLLHFVAAVAG. The J domain maps to 25-90; sequence SYYDVLQVPK…EKRKIYDRYG (66 aa).

Interacts with BIP1.

It is found in the endoplasmic reticulum. In terms of biological role, may play a role in protein folding in the endoplasmic reticulum. The polypeptide is DnaJ protein ERDJ3B (Oryza sativa subsp. japonica (Rice)).